The chain runs to 401 residues: Homoserine O-acetyltransferase (401 aa).

Residues 37–358 enclose the AB hydrolase-1 domain; the sequence is NAVLVCHALT…HGHDAFLVEP (322 aa). Catalysis depends on serine 146, which acts as the Nucleophile. Residue arginine 215 coordinates substrate. Catalysis depends on residues aspartate 318 and histidine 351. Aspartate 352 contacts substrate.

The protein belongs to the AB hydrolase superfamily. MetX family. Homodimer.

Its subcellular location is the cytoplasm. The enzyme catalyses L-homoserine + acetyl-CoA = O-acetyl-L-homoserine + CoA. It participates in amino-acid biosynthesis; L-methionine biosynthesis via de novo pathway; O-acetyl-L-homoserine from L-homoserine: step 1/1. In terms of biological role, transfers an acetyl group from acetyl-CoA to L-homoserine, forming acetyl-L-homoserine. This is Homoserine O-acetyltransferase from Natronomonas pharaonis (strain ATCC 35678 / DSM 2160 / CIP 103997 / JCM 8858 / NBRC 14720 / NCIMB 2260 / Gabara) (Halobacterium pharaonis).